Here is a 346-residue protein sequence, read N- to C-terminus: RNA polymerase II holoenzyme cyclin-like subunit (346 aa).

The Cyclin N-terminal domain occupies 59–158; sequence NLLIKLGRRL…EMDSYLFLHH (100 aa).

It belongs to the cyclin family. Cyclin C subfamily. In terms of assembly, component of the SRB8-11 complex, a regulatory module of the Mediator complex.

The protein localises to the nucleus. Its function is as follows. Component of the SRB8-11 complex. The SRB8-11 complex is a regulatory module of the Mediator complex which is itself involved in regulation of basal and activated RNA polymerase II-dependent transcription. The SRB8-11 complex may be involved in the transcriptional repression of a subset of genes regulated by Mediator. It may inhibit the association of the Mediator complex with RNA polymerase II to form the holoenzyme complex. The SRB8-11 complex phosphorylates the C-terminal domain (CTD) of the largest subunit of RNA polymerase II. In Scheffersomyces stipitis (strain ATCC 58785 / CBS 6054 / NBRC 10063 / NRRL Y-11545) (Yeast), this protein is RNA polymerase II holoenzyme cyclin-like subunit (SSN8).